Reading from the N-terminus, the 1279-residue chain is ATP-dependent helicase/nuclease subunit A (1279 aa).

Residues 4-499 (TKWTDEQRQA…VKLFKNFRSR (496 aa)) form the UvrD-like helicase ATP-binding domain. 25 to 32 (AGAGAGKT) contacts ATP. Residues 526-853 (EEALKVGASY…RIMSIHKSKG (328 aa)) enclose the UvrD-like helicase C-terminal domain.

Belongs to the helicase family. AddA subfamily. Heterodimer of AddA and AddB/RexB. It depends on Mg(2+) as a cofactor.

The catalysed reaction is Couples ATP hydrolysis with the unwinding of duplex DNA by translocating in the 3'-5' direction.. It carries out the reaction ATP + H2O = ADP + phosphate + H(+). Its function is as follows. The heterodimer acts as both an ATP-dependent DNA helicase and an ATP-dependent, dual-direction single-stranded exonuclease. Recognizes the chi site generating a DNA molecule suitable for the initiation of homologous recombination. The AddA nuclease domain is required for chi fragment generation; this subunit has the helicase and 3' -&gt; 5' nuclease activities. The sequence is that of ATP-dependent helicase/nuclease subunit A from Clostridium botulinum (strain Kyoto / Type A2).